Consider the following 389-residue polypeptide: Tyrosinase-like protein phomQ1 (389 aa).

The helical transmembrane segment at 53 to 73 (TIIVVSVITFAAIIGCWVFLS) threads the bilayer. Residues histidine 141 and histidine 150 each contribute to the Cu cation site. Asparagine 220 carries an N-linked (GlcNAc...) asparagine glycan. Cu cation-binding residues include histidine 290 and histidine 316.

It belongs to the tyrosinase family. Requires Cu(2+) as cofactor.

Its subcellular location is the membrane. It functions in the pathway mycotoxin biosynthesis. Tyrosinase-like protein; part of the gene cluster that mediates the biosynthesis of the phomopsins, a group of hexapeptide mycotoxins which infects lupins and causes lupinosis disease in livestock. Within the pathway, phomQ1 functions as a halogenase, converting. The pathway starts with the processing of the precursor phomA by several endopeptidases including kexin proteases as well as the cluster-specific S41 family peptidase phomP1 and the oligopeptidase phomG to produce 10 identical copies of the hexapeptide Tyr-Val-Ile-Pro-Ile-Asp. After being excised from the precursor peptide, the core peptides are cyclized and modified post-translationally by enzymes encoded within the gene cluster. The timing and order of proteolysis of the phomA precursor and PTMs are still unknown. Two tyrosinase-like enzymes, phomQ1 and phomQ2, catalyze the chlorination and hydroxylation of Tyr, respectively. PhomYb, is proposed to be involved in the construction of the macrocyclic structure. The other 4 ustYa family proteins may be involved in PTMs that generate the unique structure of phomopsin A. PhomYa is required for the hydroxylation of C-beta of Tyr. PhomYc, phomYd, and phomYe are responsible for the biosynthesis of 2,3-dehydroisoleucine (dIle), 2,3-dehydroaspartic acid (dAsp), and 3,4-dehydroproline (dPro), respectively. While dIle formation by phomYc is indispensable for the installation of dAsp by phomYd, the order of the other PTMs have not been elucidated yet. Most of the biosynthetic enzymes likely have broad substrate specificity, and thus, there might be a metabolic grid from a precursor to phomopsin A. The enzyme(s) responsible for the biosynthesis of 3,4-dehydrovaline (dVal) have also not been identified yet. Finally, phomM acts as an S-adenosylmethionine-dependent alpha-N-methyltransferase that catalyzes two successive N-methylation reactions, converting N-desmethyl-phomopsin A to phomopsin A and phomopsin A further to an N,N-dimethylated congener called phomopsin E. This is Tyrosinase-like protein phomQ1 from Diaporthe leptostromiformis (Lupinosis disease fungus).